The sequence spans 281 residues: Nhr-229 coiled coil domain containing nccd-1 (281 aa).

In Caenorhabditis elegans, this protein is Nhr-229 coiled coil domain containing nccd-1.